The following is a 249-amino-acid chain: ATP-dependent dethiobiotin synthetase BioD (249 aa).

11-16 contacts ATP; it reads NVGKTI. Thr15 serves as a coordination point for Mg(2+). Lys31 is a catalytic residue. Residue Thr35 participates in substrate binding. ATP is bound by residues Asp40, 127-130, 188-189, and 215-217; these read EGAG, NS, and PYL. Mg(2+)-binding residues include Asp40 and Glu127.

The protein belongs to the dethiobiotin synthetase family. As to quaternary structure, homodimer. It depends on Mg(2+) as a cofactor.

It localises to the cytoplasm. It catalyses the reaction (7R,8S)-7,8-diammoniononanoate + CO2 + ATP = (4R,5S)-dethiobiotin + ADP + phosphate + 3 H(+). It participates in cofactor biosynthesis; biotin biosynthesis; biotin from 7,8-diaminononanoate: step 1/2. Functionally, catalyzes a mechanistically unusual reaction, the ATP-dependent insertion of CO2 between the N7 and N8 nitrogen atoms of 7,8-diaminopelargonic acid (DAPA, also called 7,8-diammoniononanoate) to form a ureido ring. The polypeptide is ATP-dependent dethiobiotin synthetase BioD (Neorickettsia sennetsu (strain ATCC VR-367 / Miyayama) (Ehrlichia sennetsu)).